A 504-amino-acid chain; its full sequence is ATP synthase subunit alpha, chloroplastic (504 aa).

170-177 contributes to the ATP binding site; that stretch reads GDRQTGKT.

Belongs to the ATPase alpha/beta chains family. F-type ATPases have 2 components, CF(1) - the catalytic core - and CF(0) - the membrane proton channel. CF(1) has five subunits: alpha(3), beta(3), gamma(1), delta(1), epsilon(1). CF(0) has four main subunits: a, b, b' and c.

The protein localises to the plastid. It is found in the chloroplast thylakoid membrane. The catalysed reaction is ATP + H2O + 4 H(+)(in) = ADP + phosphate + 5 H(+)(out). In terms of biological role, produces ATP from ADP in the presence of a proton gradient across the membrane. The alpha chain is a regulatory subunit. The polypeptide is ATP synthase subunit alpha, chloroplastic (Triticum aestivum (Wheat)).